A 1235-amino-acid polypeptide reads, in one-letter code: MSHEELTALAPVGPAAFLYFSRLNAETQEILATLSLCDRSSSVVIAPLLAGLTVEADFGVSVRTPVLCYDGGVLTKVTSFCPFALYFHHTQGIVAFTEDHGDVHRLCEDARQKYALEAYTPEADRVPTDLAALCAAVGCQASETTVHVVVGNGLKEFLFAGQLIPCVEEATTVRLHGGEAVRVPLYPPTLFNSLQLDAEADEVSLDARSAFVEARGLYVPAVSETLFYYVYTSWCQSLRFSEPRVLIEAALRQFVHDSQQSVKLAPHKRYLGYMSQRLSSLEKDHLMLSDAVVCELAFSFASVFFDSAYQPAESMLFSEWPLVTNATDHRDLIRALTELKLHLSTHVAALVFSANSVLYQHRLVYLQSSARHPSAGGTASQETLLKAIQFTNGLSAACEDVYNDARKVLKFQGAPLKDERYGPQHLALVCGTCPQLVSGFVWYLNRVSVYNTGLSGSSTLTNHLVGCAAGLCEACGGTCCHTCYQTAFVRVRTRLPVVPKQPKKEPCVITVQSRFLNDVDILGSFGRRYNVDAKDGGLDGKGDDGVPGGGAGGGGGRDVSGGPSDGLGGGRGGGGGGDSGGMMGRGGRMLGASVDRTYRLNRILDYCRKMRLIDPVTGEDTFSAHGKSDFVAVFSALNKFVDDEALGFVSEVRLKSSRDEVAGATQAFNLDLNPYAVAFQPLLAYAYFRSVFYVIQNVALITATSYIVDNPLTTNLVSKWMTQHFQSIHGAFSTTSSRKGFLFTKQIKSSKNSDHDRLLDFRLYAQGTYAVVPMEIKLSRLSVPTLIMVRVKNRPIYRAGKGNAGSVFFRRDHVPRRNPAKGCLGFLLYRHHERLFPECGLPCLQFWQKVCSNALPKNVPIGDMGEFNAFVKFLVAVTADYQEHDLLDVAPDCVLSYVESRFHNKFLCYYGFKDYIGSLHGLTTRLTTQNHAQFPHVLGASPRFSSPAEFALHVKGLKTAGVPAPMAATVARESLVRSVFEHRSLVTVPVSVEKYAGINNSKEIYQFGQIGYFSGNGVERSLNVSSMSGQDYRFMRQRYLLATRLADVLIKRSRRENVLFDADLIKNRVMLALDAENLDCDPEVMAVYEILSVREEIPASDDVLFFVDGCEALAASLMDKFAALQEQGVEDFSLENLRRVLDADAQRLTDAAGGEVHDLSALFAPSGVGAASGVGGGGLLLGESVAGNSICFGVPGETGGGCFLVNAGEDEAGGVGGSSGGGGGSGLLPAKRSRL.

Positions G536–G584 are disordered. Over residues G545–G584 the composition is skewed to gly residues. Positions F846–W847 match the Required for filament formation motif. A compositionally biased stretch (gly residues) spans G1214–G1226. Positions G1214–L1235 are disordered. A required for nuclear localization region spans residues R1232–L1235.

This sequence belongs to the herpesviridae major DNA-binding protein family. Homooligomers. Forms double-helical filaments necessary for the formation of replication compartments within the host nucleus. Interacts with the origin-binding protein. Interacts with the helicase primase complex; this interaction stimulates primer synthesis activity of the helicase-primase complex. Interacts with the DNA polymerase. Interacts with the alkaline exonuclease; this interaction increases its nuclease processivity.

The protein localises to the host nucleus. In terms of biological role, plays several crucial roles in viral infection. Participates in the opening of the viral DNA origin to initiate replication by interacting with the origin-binding protein. May disrupt loops, hairpins and other secondary structures present on ssDNA to reduce and eliminate pausing of viral DNA polymerase at specific sites during elongation. Promotes viral DNA recombination by performing strand-transfer, characterized by the ability to transfer a DNA strand from a linear duplex to a complementary single-stranded DNA circle. Can also catalyze the renaturation of complementary single strands. Additionally, reorganizes the host cell nucleus, leading to the formation of prereplicative sites and replication compartments. This process is driven by the protein which can form double-helical filaments in the absence of DNA. This Homo sapiens (Human) protein is Major DNA-binding protein.